A 444-amino-acid polypeptide reads, in one-letter code: Methylenetetrahydrofolate--tRNA-(uracil-5-)-methyltransferase TrmFO (444 aa).

10-15 (GAGLAG) is a binding site for FAD.

It belongs to the MnmG family. TrmFO subfamily. FAD serves as cofactor.

Its subcellular location is the cytoplasm. The enzyme catalyses uridine(54) in tRNA + (6R)-5,10-methylene-5,6,7,8-tetrahydrofolate + NADH + H(+) = 5-methyluridine(54) in tRNA + (6S)-5,6,7,8-tetrahydrofolate + NAD(+). It carries out the reaction uridine(54) in tRNA + (6R)-5,10-methylene-5,6,7,8-tetrahydrofolate + NADPH + H(+) = 5-methyluridine(54) in tRNA + (6S)-5,6,7,8-tetrahydrofolate + NADP(+). Its function is as follows. Catalyzes the folate-dependent formation of 5-methyl-uridine at position 54 (M-5-U54) in all tRNAs. The protein is Methylenetetrahydrofolate--tRNA-(uracil-5-)-methyltransferase TrmFO of Streptococcus pneumoniae (strain ATCC 700669 / Spain 23F-1).